Reading from the N-terminus, the 247-residue chain is Triosephosphate isomerase (247 aa).

Substrate contacts are provided by Asn-10 and Lys-12. His-94 functions as the Electrophile in the catalytic mechanism. The active-site Proton acceptor is Glu-164.

Belongs to the triosephosphate isomerase family. Homodimer.

The protein localises to the cytoplasm. It catalyses the reaction D-glyceraldehyde 3-phosphate = dihydroxyacetone phosphate. The enzyme catalyses dihydroxyacetone phosphate = methylglyoxal + phosphate. It functions in the pathway carbohydrate biosynthesis; gluconeogenesis. Its pathway is carbohydrate degradation; glycolysis; D-glyceraldehyde 3-phosphate from glycerone phosphate: step 1/1. Its function is as follows. Triosephosphate isomerase is an extremely efficient metabolic enzyme that catalyzes the interconversion between dihydroxyacetone phosphate (DHAP) and D-glyceraldehyde-3-phosphate (G3P) in glycolysis and gluconeogenesis. Functionally, it is also responsible for the non-negligible production of methylglyoxal a reactive cytotoxic side-product that modifies and can alter proteins, DNA and lipids. In Latimeria chalumnae (Coelacanth), this protein is Triosephosphate isomerase.